Reading from the N-terminus, the 1428-residue chain is DNA-directed RNA polymerase subunit beta' (1428 aa).

Zn(2+) contacts are provided by Cys-66, Cys-68, Cys-81, and Cys-84. Asp-472, Asp-474, and Asp-476 together coordinate Mg(2+). Residues Cys-816, Cys-890, Cys-897, and Cys-900 each contribute to the Zn(2+) site.

It belongs to the RNA polymerase beta' chain family. The RNAP catalytic core consists of 2 alpha, 1 beta, 1 beta' and 1 omega subunit. When a sigma factor is associated with the core the holoenzyme is formed, which can initiate transcription. Mg(2+) serves as cofactor. It depends on Zn(2+) as a cofactor.

It carries out the reaction RNA(n) + a ribonucleoside 5'-triphosphate = RNA(n+1) + diphosphate. Functionally, DNA-dependent RNA polymerase catalyzes the transcription of DNA into RNA using the four ribonucleoside triphosphates as substrates. The chain is DNA-directed RNA polymerase subunit beta' from Phocaeicola vulgatus (strain ATCC 8482 / DSM 1447 / JCM 5826 / CCUG 4940 / NBRC 14291 / NCTC 11154) (Bacteroides vulgatus).